Reading from the N-terminus, the 335-residue chain is Beta-ketoacyl-[acyl-carrier-protein] synthase III 2 (335 aa).

Active-site residues include C116 and H256. The interval 257 to 261 (QANVR) is ACP-binding. N286 is a catalytic residue.

It belongs to the thiolase-like superfamily. FabH family. In terms of assembly, homodimer.

The protein localises to the cytoplasm. The enzyme catalyses malonyl-[ACP] + acetyl-CoA + H(+) = 3-oxobutanoyl-[ACP] + CO2 + CoA. The protein operates within lipid metabolism; fatty acid biosynthesis. Its function is as follows. Catalyzes the condensation reaction of fatty acid synthesis by the addition to an acyl acceptor of two carbons from malonyl-ACP. Catalyzes the first condensation reaction which initiates fatty acid synthesis and may therefore play a role in governing the total rate of fatty acid production. Possesses both acetoacetyl-ACP synthase and acetyl transacylase activities. Its substrate specificity determines the biosynthesis of branched-chain and/or straight-chain of fatty acids. In Bacteroides thetaiotaomicron (strain ATCC 29148 / DSM 2079 / JCM 5827 / CCUG 10774 / NCTC 10582 / VPI-5482 / E50), this protein is Beta-ketoacyl-[acyl-carrier-protein] synthase III 2.